The primary structure comprises 89 residues: Small ribosomal subunit protein uS15 (89 aa).

Residues 1–13 show a composition bias toward basic and acidic residues; it reads MTISKERKEEVIS. The tract at residues 1 to 24 is disordered; that stretch reads MTISKERKEEVISEHGAAAGDTGS.

The protein belongs to the universal ribosomal protein uS15 family. Part of the 30S ribosomal subunit. Forms a bridge to the 50S subunit in the 70S ribosome, contacting the 23S rRNA.

Its function is as follows. One of the primary rRNA binding proteins, it binds directly to 16S rRNA where it helps nucleate assembly of the platform of the 30S subunit by binding and bridging several RNA helices of the 16S rRNA. Forms an intersubunit bridge (bridge B4) with the 23S rRNA of the 50S subunit in the ribosome. The polypeptide is Small ribosomal subunit protein uS15 (Rhodopirellula baltica (strain DSM 10527 / NCIMB 13988 / SH1)).